The following is a 257-amino-acid chain: UPF0246 protein Rsph17025_0016 (257 aa).

The protein belongs to the UPF0246 family.

This chain is UPF0246 protein Rsph17025_0016, found in Cereibacter sphaeroides (strain ATCC 17025 / ATH 2.4.3) (Rhodobacter sphaeroides).